Reading from the N-terminus, the 548-residue chain is Methyl-accepting chemotaxis protein HlyB (548 aa).

The Cytoplasmic segment spans residues 1–10; that stretch reads MIINKFSLKW. A helical membrane pass occupies residues 11–31; that stretch reads MLAIAVAIPAIALLFVAFTSL. At 32 to 199 the chain is on the periplasmic side; sequence NTMSVMQAQS…SFEAGRTKQM (168 aa). A helical transmembrane segment spans residues 200–220; the sequence is VIIAAGLIISFITSLVIITNL. In terms of domain architecture, HAMP spans 218-271; that stretch reads TNLRSRVAYLKDRMSSAAANLSLRTRLELDGNDELCDIGKSFNAFIDKVHHSIE. Residues 221–548 lie on the Cytoplasmic side of the membrane; the sequence is RSRVAYLKDR…LDKLVGSFEL (328 aa). Residues 276–512 enclose the Methyl-accepting transducer domain; sequence NSKELATMAS…DINRNVEDIN (237 aa).

This sequence belongs to the methyl-accepting chemotaxis (MCP) protein family.

It localises to the cell inner membrane. Chemotactic-signal transducers respond to changes in the concentration of attractants and repellents in the environment, transduce a signal from the outside to the inside of the cell, and facilitate sensory adaptation through the variation of the level of methylation. This chain is Methyl-accepting chemotaxis protein HlyB (hlyB), found in Vibrio cholerae serotype O1 (strain ATCC 39315 / El Tor Inaba N16961).